The sequence spans 405 residues: Glucose-1-phosphate adenylyltransferase 1 (405 aa).

Alpha-D-glucose 1-phosphate is bound by residues Tyr96, Gly161, 176-177 (EK), and Ser194.

Belongs to the bacterial/plant glucose-1-phosphate adenylyltransferase family. As to quaternary structure, homotetramer.

It catalyses the reaction alpha-D-glucose 1-phosphate + ATP + H(+) = ADP-alpha-D-glucose + diphosphate. The protein operates within glycan biosynthesis; glycogen biosynthesis. In terms of biological role, involved in the biosynthesis of ADP-glucose, a building block required for the elongation reactions to produce glycogen. Catalyzes the reaction between ATP and alpha-D-glucose 1-phosphate (G1P) to produce pyrophosphate and ADP-Glc. This Vibrio vulnificus (strain YJ016) protein is Glucose-1-phosphate adenylyltransferase 1.